We begin with the raw amino-acid sequence, 49 residues long: Glutathione peroxidase (49 aa).

The protein belongs to the glutathione peroxidase family.

It catalyses the reaction 2 glutathione + H2O2 = glutathione disulfide + 2 H2O. With respect to regulation, inhibited by Cu(2+), SDS and DTT. Activity is slightly increased by Fe(2+), Mn(2+), triton X-100 and EDTA. In terms of biological role, glutathione peroxidase which may protect the cell from oxidative damage. In Lactiplantibacillus plantarum (Lactobacillus plantarum), this protein is Glutathione peroxidase.